A 544-amino-acid polypeptide reads, in one-letter code: Chaperonin GroEL (544 aa).

Residues 30–33, lysine 51, 87–91, glycine 415, and aspartate 496 contribute to the ATP site; these read TLGP and DGTTT.

This sequence belongs to the chaperonin (HSP60) family. Forms a cylinder of 14 subunits composed of two heptameric rings stacked back-to-back. Interacts with the co-chaperonin GroES.

It localises to the cytoplasm. The catalysed reaction is ATP + H2O + a folded polypeptide = ADP + phosphate + an unfolded polypeptide.. Functionally, together with its co-chaperonin GroES, plays an essential role in assisting protein folding. The GroEL-GroES system forms a nano-cage that allows encapsulation of the non-native substrate proteins and provides a physical environment optimized to promote and accelerate protein folding. In Granulibacter bethesdensis (strain ATCC BAA-1260 / CGDNIH1), this protein is Chaperonin GroEL.